Consider the following 354-residue polypeptide: CX3C chemokine receptor 1 (354 aa).

The Extracellular portion of the chain corresponds to 1–32 (MSTSFPELDLENFEYDDSAEACYLGDIVAFGT). The chain crosses the membrane as a helical span at residues 33-60 (IFLSVFYALVFTFGLVGNLLVVLALTNS). Residues 61–70 (RKPKSITDIY) lie on the Cytoplasmic side of the membrane. The helical transmembrane segment at 71–91 (LLNLALSDLLFVATLPFWTHY) threads the bilayer. At 92-104 (LISHEGLHNAMCK) the chain is on the extracellular side. C103 and C176 are joined by a disulfide. The chain crosses the membrane as a helical span at residues 105-126 (LTTAFFFIGFFGGIFFITVISI). At 127 to 143 (DRYLAIVLAANSMNNRT) the chain is on the cytoplasmic side. A helical transmembrane segment spans residues 144-168 (VQHGVTISLGVWAAAILVASPQFMF). Over 169 to 196 (TKRKDNECLGDYPEVLQEMWPVLRNSEV) the chain is Extracellular. Residues 197–216 (NILGFALPLLIMSFCYFRII) form a helical membrane-spanning segment. Residues 217-232 (QTLFSCKNRKKARAVR) are Cytoplasmic-facing. The chain crosses the membrane as a helical span at residues 233-257 (LILLVVFAFFLFWTPYNIMIFLETL). Over 258–274 (KFYNFFPSCDMKRDLRL) the chain is Extracellular. The helical transmembrane segment at 275-298 (ALSVTETVAFSHCCLNPFIYAFAG) threads the bilayer. The Cytoplasmic segment spans residues 299 to 354 (EKFRRYLGHLYRKCLAVLCGHPVHTGFSPESQRSRQDSILSSFTHYTSEGDGSLLL). T345 carries the phosphothreonine modification.

Belongs to the G-protein coupled receptor 1 family. In terms of assembly, found in a ternary complex with CX3CL1 and ITGAV:ITGB3 or ITGA4:ITGB1. This protein is not N-glycosylated which is unusual for G-protein-coupled receptors. Specifically expressed in subsets of leukocytes: expressed in monocytes, subsets of T-cells and natural killer (NK) cells in the circulation, dendritic cells, as well as in microglia in the central nervous system (CNS). Expression level subdivides blood monocytes into two major functional subsets; CD14(+)CD16(-)-CX3CR1(low) inflammatory monocytes and CD14(low)CD16(+)CX3CR1(high) homeostatic monocytes. Expressed in myeloid-derived mucosal dendritic cells, which populate the entire lamina propria of the small intestine.

It is found in the cell membrane. Its function is as follows. Receptor for the C-X3-C chemokine fractalkine (CX3CL1) present on many early leukocyte cells; CX3CR1-CX3CL1 signaling exerts distinct functions in different tissue compartments, such as immune response, inflammation, cell adhesion and chemotaxis. CX3CR1-CX3CL1 signaling mediates cell migratory functions. Responsible for the recruitment of natural killer (NK) cells to inflamed tissues. Acts as a regulator of inflammation process leading to atherogenesis by mediating macrophage and monocyte recruitment to inflamed atherosclerotic plaques, promoting cell survival. Involved in airway inflammation by promoting interleukin 2-producing T helper (Th2) cell survival in inflamed lung. Involved in the migration of circulating monocytes to non-inflamed tissues, where they differentiate into macrophages and dendritic cells. Acts as a negative regulator of angiogenesis, probably by promoting macrophage chemotaxis. Plays a key role in brain microglia by regulating inflammatory response in the central nervous system (CNS) and regulating synapse maturation. Required to restrain the microglial inflammatory response in the CNS and the resulting parenchymal damage in response to pathological stimuli. Involved in brain development by participating in synaptic pruning, a natural process during which brain microglia eliminates extra synapses during postnatal development. Synaptic pruning by microglia is required to promote the maturation of circuit connectivity during brain development. Acts as an important regulator of the gut microbiota by controlling immunity to intestinal bacteria and fungi. Expressed in lamina propria dendritic cells in the small intestine, which form transepithelial dendrites capable of taking up bacteria in order to provide defense against pathogenic bacteria. Required to initiate innate and adaptive immune responses against dissemination of commensal fungi (mycobiota) component of the gut: expressed in mononuclear phagocytes (MNPs) and acts by promoting induction of antifungal IgG antibodies response to confer protection against disseminated C.albicans or C.auris infection. Also acts as a receptor for C-C motif chemokine CCL26, inducing cell chemotaxis. This is CX3C chemokine receptor 1 from Mus musculus (Mouse).